A 503-amino-acid chain; its full sequence is Podocalyxin (503 aa).

An N-terminal signal peptide occupies residues 1 to 21; the sequence is MPPTTALSALLLLLLSPASHS. A disordered region spans residues 19–236; sequence SHSHNGNETS…PLTSQTPGIT (218 aa). Polar residues predominate over residues 20 to 50; that stretch reads HSHNGNETSTSAIKSSTVQSHQSATTSTEVT. Over 22–404 the chain is Extracellular; sequence HNGNETSTSA…PPEVNEDRFS (383 aa). 3 N-linked (GlcNAc...) asparagine glycosylation sites follow: Asn-25, Asn-89, and Asn-94. Residues 61 to 91 are compositionally biased toward low complexity; the sequence is STQPSNPTPFTTSTQSPSMPTSTPNPTSNQS. Over residues 107-126 the composition is skewed to low complexity; the sequence is TSSPSSTAFTSSSGQTASSG. Polar residues predominate over residues 131–183; it reads DSFTTAPTTTLGLINVSSQPTDLNTTSKLLSTPTTDNTTSPQQPVDSSPSTAS. Asn-145, Asn-154, Asn-167, and Asn-206 each carry an N-linked (GlcNAc...) asparagine glycan. Residues 196 to 208 show a composition bias toward low complexity; it reads SSSGSTPSTDNST. A compositionally biased stretch (polar residues) spans 222-236; sequence SEATQPLTSQTPGIT. Residue Asn-303 is glycosylated (N-linked (GlcNAc...) asparagine). Residues 405 to 425 form a helical membrane-spanning segment; that stretch reads LPLIITIVCMASFLLLVAALY. The Cytoplasmic segment spans residues 426–503; it reads GCCHQRISQR…DLDEEEDTHL (78 aa). Thr-463 carries the post-translational modification Phosphothreonine. Position 482 is a phosphoserine (Ser-482). A Phosphothreonine modification is found at Thr-501.

The protein belongs to the podocalyxin family. Monomer; when associated with the membrane raft. Oligomer; when integrated in the apical membrane. Found in a complex with EZR, PODXL and NHERF2. Associates with the actin cytoskeleton through complex formation with EZR and NHERF2. Interacts (via the C-terminal PDZ-binding motif DTHL) with NHERF1 (via the PDZ domains); interaction is not detected in glomerular epithelium cells, take place early in the secretory pathway and is necessary for its apical membrane sorting. Interacts (via the C-terminal PDZ-binding motif DTHL) with NHERF2 (via the PDZ 1 domain); interaction is detected in glomerular epithelium cells. Interacts with EZR. Post-translationally, N- and O-linked glycosylated. Sialoglycoprotein. As to expression, expressed in liver cells and hematopoietic cells (at protein level). Glomerular epithelium cell (podocyte).

It localises to the apical cell membrane. It is found in the cell projection. The protein resides in the microvillus. Its subcellular location is the membrane raft. The protein localises to the lamellipodium. It localises to the filopodium. It is found in the ruffle. The protein resides in the membrane. Functionally, involved in the regulation of both adhesion and cell morphology and cancer progression. Functions as an anti-adhesive molecule that maintains an open filtration pathway between neighboring foot processes in the podocyte by charge repulsion. Acts as a pro-adhesive molecule, enhancing the adherence of cells to immobilized ligands, increasing the rate of migration and cell-cell contacts in an integrin-dependent manner. Induces the formation of apical actin-dependent microvilli. Involved in the formation of a preapical plasma membrane subdomain to set up initial epithelial polarization and the apical lumen formation during renal tubulogenesis. Plays a role in cancer development and aggressiveness by inducing cell migration and invasion through its interaction with the actin-binding protein EZR. Affects EZR-dependent signaling events, leading to increased activities of the MAPK and PI3K pathways in cancer cells. This chain is Podocalyxin (Podxl), found in Mus musculus (Mouse).